A 401-amino-acid chain; its full sequence is 3-sulfinopropanoyl-CoA desulfinase (401 aa).

Residues 121–124, S130, and 153–156 contribute to the FAD site; these read ICIS and YWIT. 243–244 contributes to the substrate binding site; that stretch reads YN. Residues R272, Q339, S343, 366 to 370, and Q387 each bind FAD; that span reads GGTAQ.

The protein belongs to the acyl-CoA dehydrogenase family. As to quaternary structure, homotetramer. FAD serves as cofactor.

The catalysed reaction is 3-sulfinopropanoyl-CoA + H2O = propanoyl-CoA + sulfite + H(+). Catalyzes the conversion 3-sulfinopropanoyl-CoA (3SP-CoA) to propanoyl-CoA by abstraction of sulfite. Does not show dehydrogenase activity. Involved in the degradation of 3,3'-dithiodipropionate (DTDP), a sulfur-containing precursor substrate for biosynthesis of polythioesters (PTEs). This chain is 3-sulfinopropanoyl-CoA desulfinase, found in Advenella mimigardefordensis (strain DSM 17166 / LMG 22922 / DPN7).